Here is a 227-residue protein sequence, read N- to C-terminus: Cytochrome c oxidase subunit 2 (227 aa).

At 1–14 (MAYPFQLGLQDATS) the chain is on the mitochondrial intermembrane side. Residues 15–45 (PIMEELTNFHDHTLMIVFLISSLVLYIISLM) form a helical membrane-spanning segment. Topologically, residues 46 to 59 (LTTKLTHTSTMDAQ) are mitochondrial matrix. A helical transmembrane segment spans residues 60 to 87 (EVETIWTILPAAILVLIALPSLRILYMM). Residues 88–227 (DEINNPALTV…YFENWSASMI (140 aa)) lie on the Mitochondrial intermembrane side of the membrane. The Cu cation site is built by His-161, Cys-196, Glu-198, Cys-200, His-204, and Met-207. Glu-198 contacts Mg(2+). Tyr-218 is subject to Phosphotyrosine.

The protein belongs to the cytochrome c oxidase subunit 2 family. As to quaternary structure, component of the cytochrome c oxidase (complex IV, CIV), a multisubunit enzyme composed of 14 subunits. The complex is composed of a catalytic core of 3 subunits MT-CO1, MT-CO2 and MT-CO3, encoded in the mitochondrial DNA, and 11 supernumerary subunits COX4I, COX5A, COX5B, COX6A, COX6B, COX6C, COX7A, COX7B, COX7C, COX8 and NDUFA4, which are encoded in the nuclear genome. The complex exists as a monomer or a dimer and forms supercomplexes (SCs) in the inner mitochondrial membrane with NADH-ubiquinone oxidoreductase (complex I, CI) and ubiquinol-cytochrome c oxidoreductase (cytochrome b-c1 complex, complex III, CIII), resulting in different assemblies (supercomplex SCI(1)III(2)IV(1) and megacomplex MCI(2)III(2)IV(2)). Found in a complex with TMEM177, COA6, COX18, COX20, SCO1 and SCO2. Interacts with TMEM177 in a COX20-dependent manner. Interacts with COX20. Interacts with COX16. The cofactor is Cu cation.

Its subcellular location is the mitochondrion inner membrane. The catalysed reaction is 4 Fe(II)-[cytochrome c] + O2 + 8 H(+)(in) = 4 Fe(III)-[cytochrome c] + 2 H2O + 4 H(+)(out). In terms of biological role, component of the cytochrome c oxidase, the last enzyme in the mitochondrial electron transport chain which drives oxidative phosphorylation. The respiratory chain contains 3 multisubunit complexes succinate dehydrogenase (complex II, CII), ubiquinol-cytochrome c oxidoreductase (cytochrome b-c1 complex, complex III, CIII) and cytochrome c oxidase (complex IV, CIV), that cooperate to transfer electrons derived from NADH and succinate to molecular oxygen, creating an electrochemical gradient over the inner membrane that drives transmembrane transport and the ATP synthase. Cytochrome c oxidase is the component of the respiratory chain that catalyzes the reduction of oxygen to water. Electrons originating from reduced cytochrome c in the intermembrane space (IMS) are transferred via the dinuclear copper A center (CU(A)) of subunit 2 and heme A of subunit 1 to the active site in subunit 1, a binuclear center (BNC) formed by heme A3 and copper B (CU(B)). The BNC reduces molecular oxygen to 2 water molecules using 4 electrons from cytochrome c in the IMS and 4 protons from the mitochondrial matrix. The protein is Cytochrome c oxidase subunit 2 (MT-CO2) of Rhabdomys pumilio (Four-striped grass mouse).